The sequence spans 367 residues: Beta sliding clamp (367 aa).

Belongs to the beta sliding clamp family. In terms of assembly, forms a ring-shaped head-to-tail homodimer around DNA which binds and tethers DNA polymerases and other proteins to the DNA. The DNA replisome complex has a single clamp-loading complex (3 tau and 1 each of delta, delta', psi and chi subunits) which binds 3 Pol III cores (1 core on the leading strand and 2 on the lagging strand) each with a beta sliding clamp dimer. Additional proteins in the replisome are other copies of gamma, psi and chi, Ssb, DNA helicase and RNA primase.

The protein resides in the cytoplasm. Its function is as follows. Confers DNA tethering and processivity to DNA polymerases and other proteins. Acts as a clamp, forming a ring around DNA (a reaction catalyzed by the clamp-loading complex) which diffuses in an ATP-independent manner freely and bidirectionally along dsDNA. Initially characterized for its ability to contact the catalytic subunit of DNA polymerase III (Pol III), a complex, multichain enzyme responsible for most of the replicative synthesis in bacteria; Pol III exhibits 3'-5' exonuclease proofreading activity. The beta chain is required for initiation of replication as well as for processivity of DNA replication. The polypeptide is Beta sliding clamp (dnaN) (Proteus mirabilis).